A 74-amino-acid polypeptide reads, in one-letter code: U3-agatoxin-Ao1d (74 aa).

The first 20 residues, 1–20 (MKAAISLLLLSALLFVVIEA), serve as a signal peptide directing secretion. Residues 21 to 34 (ITYEEGKELFQGER) constitute a propeptide that is removed on maturation. Cystine bridges form between cysteine 37–cysteine 53, cysteine 44–cysteine 58, cysteine 52–cysteine 68, and cysteine 60–cysteine 66. Serine amide is present on serine 72.

Belongs to the neurotoxin 07 (Beta/delta-agtx) family. 02 (aga-3) subfamily. As to expression, expressed by the venom gland.

Its subcellular location is the secreted. Insecticidal neurotoxin that induces an irreversible spastic paralysis when injected into insects. Modifies presynaptic voltage-gated sodium channels (Nav), causing them to open at the normal resting potential of the nerve. This leads to spontaneous release of neurotransmitter and repetitive action potentials in motor neurons. The chain is U3-agatoxin-Ao1d from Agelena orientalis (Funnel-web spider).